The sequence spans 283 residues: Polyamine aminopropyltransferase (283 aa).

In terms of domain architecture, PABS spans 2–238 (ELWYTEEWTE…GHWLFGFASK (237 aa)). S-methyl-5'-thioadenosine is bound at residue Gln31. The spermidine site is built by His62 and Asp86. S-methyl-5'-thioadenosine is bound by residues Glu106 and 137–138 (DG). Asp156 functions as the Proton acceptor in the catalytic mechanism. Position 156–159 (156–159 (DSTD)) interacts with spermidine. Pro163 lines the S-methyl-5'-thioadenosine pocket.

This sequence belongs to the spermidine/spermine synthase family. In terms of assembly, homodimer or homotetramer.

The protein localises to the cytoplasm. The catalysed reaction is S-adenosyl 3-(methylsulfanyl)propylamine + putrescine = S-methyl-5'-thioadenosine + spermidine + H(+). Its pathway is amine and polyamine biosynthesis; spermidine biosynthesis; spermidine from putrescine: step 1/1. Catalyzes the irreversible transfer of a propylamine group from the amino donor S-adenosylmethioninamine (decarboxy-AdoMet) to putrescine (1,4-diaminobutane) to yield spermidine. This is Polyamine aminopropyltransferase from Clostridioides difficile (strain 630) (Peptoclostridium difficile).